The chain runs to 509 residues: Methionine--tRNA ligase (509 aa).

The short motif at 12 to 22 (YYVNDVPHIGH) is the 'HIGH' region element. The 'KMSKS' region motif lies at 295–299 (KISKS). K298 contributes to the ATP binding site.

Belongs to the class-I aminoacyl-tRNA synthetase family. MetG type 2B subfamily. Monomer.

It is found in the cytoplasm. It carries out the reaction tRNA(Met) + L-methionine + ATP = L-methionyl-tRNA(Met) + AMP + diphosphate. In terms of biological role, is required not only for elongation of protein synthesis but also for the initiation of all mRNA translation through initiator tRNA(fMet) aminoacylation. This Rickettsia bellii (strain RML369-C) protein is Methionine--tRNA ligase.